The chain runs to 178 residues: Ribosomal RNA small subunit methyltransferase G (178 aa).

Residues glycine 54, leucine 59, 105–106 (LE), and arginine 120 each bind S-adenosyl-L-methionine.

It belongs to the methyltransferase superfamily. RNA methyltransferase RsmG family.

It is found in the cytoplasm. It carries out the reaction guanosine(527) in 16S rRNA + S-adenosyl-L-methionine = N(7)-methylguanosine(527) in 16S rRNA + S-adenosyl-L-homocysteine. Specifically methylates the N7 position of guanine in position 527 of 16S rRNA. In Helicobacter pylori (strain HPAG1), this protein is Ribosomal RNA small subunit methyltransferase G.